Reading from the N-terminus, the 172-residue chain is 3-hydroxydecanoyl-[acyl-carrier-protein] dehydratase (172 aa).

The active site involves His70.

The protein belongs to the thioester dehydratase family. FabA subfamily. In terms of assembly, homodimer.

The protein resides in the cytoplasm. It carries out the reaction a (3R)-hydroxyacyl-[ACP] = a (2E)-enoyl-[ACP] + H2O. The catalysed reaction is (3R)-hydroxydecanoyl-[ACP] = (2E)-decenoyl-[ACP] + H2O. The enzyme catalyses (2E)-decenoyl-[ACP] = (3Z)-decenoyl-[ACP]. It functions in the pathway lipid metabolism; fatty acid biosynthesis. In terms of biological role, necessary for the introduction of cis unsaturation into fatty acids. Catalyzes the dehydration of (3R)-3-hydroxydecanoyl-ACP to E-(2)-decenoyl-ACP and then its isomerization to Z-(3)-decenoyl-ACP. Can catalyze the dehydratase reaction for beta-hydroxyacyl-ACPs with saturated chain lengths up to 16:0, being most active on intermediate chain length. In Xylella fastidiosa (strain M12), this protein is 3-hydroxydecanoyl-[acyl-carrier-protein] dehydratase.